Here is a 64-residue protein sequence, read N- to C-terminus: Temporin-ALg (64 aa).

An N-terminal signal peptide occupies residues 1–22 (MFTLKKSLLLLFFLGTINLSLC). Residues 23-46 (EQERNAEEERRDDLGERQAEVEKR) constitute a propeptide that is removed on maturation. The residue at position 62 (L62) is a Leucine amide.

The protein belongs to the frog skin active peptide (FSAP) family. Temporin subfamily. Expressed by the skin glands.

Its subcellular location is the secreted. Functionally, antimicrobial peptide with activity against Gram-positive and Gram-negative bacteria and against fungi. Has been tested against S.aureus (MIC=2.5 ug/mL), B.pumilus (MIC=2.5 ug/mL), B.cereus (MIC=30.0 ug/mL), E.coli (MIC=5.0 ug/mL), B.dysenteriae (MIC=10.0 ug/mL), A.cacoaceticus (MIC=30.0 ug/mL), P.aeruginosa (MIC=7.5 ug/mL) and C.albicans (MIC=1.25 ug/mL). Also shows a weak hemolytic activity. This Amolops loloensis (Lolokou Sucker Frog) protein is Temporin-ALg.